A 640-amino-acid chain; its full sequence is 1-deoxy-D-xylulose-5-phosphate synthase (640 aa).

Thiamine diphosphate contacts are provided by residues histidine 79 and glycine 120–serine 122. Aspartate 151 serves as a coordination point for Mg(2+). Residues glycine 152 to glycine 153, asparagine 180, tyrosine 288, and glutamate 372 contribute to the thiamine diphosphate site. Asparagine 180 serves as a coordination point for Mg(2+).

It belongs to the transketolase family. DXPS subfamily. In terms of assembly, homodimer. Mg(2+) is required as a cofactor. It depends on thiamine diphosphate as a cofactor.

It catalyses the reaction D-glyceraldehyde 3-phosphate + pyruvate + H(+) = 1-deoxy-D-xylulose 5-phosphate + CO2. Its pathway is metabolic intermediate biosynthesis; 1-deoxy-D-xylulose 5-phosphate biosynthesis; 1-deoxy-D-xylulose 5-phosphate from D-glyceraldehyde 3-phosphate and pyruvate: step 1/1. In terms of biological role, catalyzes the acyloin condensation reaction between C atoms 2 and 3 of pyruvate and glyceraldehyde 3-phosphate to yield 1-deoxy-D-xylulose-5-phosphate (DXP). In Nitrosococcus oceani (strain ATCC 19707 / BCRC 17464 / JCM 30415 / NCIMB 11848 / C-107), this protein is 1-deoxy-D-xylulose-5-phosphate synthase.